The chain runs to 118 residues: Large ribosomal subunit protein uL18 (118 aa).

The interval 1–26 is disordered; that stretch reads MISKPDKNKIRQKRHRRVRGKLSGTA. Basic residues predominate over residues 10–20; that stretch reads IRQKRHRRVRG.

It belongs to the universal ribosomal protein uL18 family. Part of the 50S ribosomal subunit; part of the 5S rRNA/L5/L18/L25 subcomplex. Contacts the 5S and 23S rRNAs.

In terms of biological role, this is one of the proteins that bind and probably mediate the attachment of the 5S RNA into the large ribosomal subunit, where it forms part of the central protuberance. The chain is Large ribosomal subunit protein uL18 from Streptococcus equi subsp. zooepidemicus (strain H70).